A 370-amino-acid chain; its full sequence is Histidinol-phosphate aminotransferase 2 (370 aa).

Lysine 230 bears the N6-(pyridoxal phosphate)lysine mark.

It belongs to the class-II pyridoxal-phosphate-dependent aminotransferase family. Histidinol-phosphate aminotransferase subfamily. In terms of assembly, homodimer. Requires pyridoxal 5'-phosphate as cofactor.

The catalysed reaction is L-histidinol phosphate + 2-oxoglutarate = 3-(imidazol-4-yl)-2-oxopropyl phosphate + L-glutamate. Its pathway is amino-acid biosynthesis; L-histidine biosynthesis; L-histidine from 5-phospho-alpha-D-ribose 1-diphosphate: step 7/9. This Pseudomonas fluorescens (strain ATCC BAA-477 / NRRL B-23932 / Pf-5) protein is Histidinol-phosphate aminotransferase 2.